A 407-amino-acid polypeptide reads, in one-letter code: Probable tRNA sulfurtransferase (407 aa).

Residues 61 to 165 (NEITYRLSKI…LDAIYMYEEV (105 aa)) form the THUMP domain. ATP-binding positions include 183-184 (ML), 208-209 (HF), arginine 265, glycine 287, and glutamine 296.

It belongs to the ThiI family.

It localises to the cytoplasm. It catalyses the reaction [ThiI sulfur-carrier protein]-S-sulfanyl-L-cysteine + a uridine in tRNA + 2 reduced [2Fe-2S]-[ferredoxin] + ATP + H(+) = [ThiI sulfur-carrier protein]-L-cysteine + a 4-thiouridine in tRNA + 2 oxidized [2Fe-2S]-[ferredoxin] + AMP + diphosphate. The catalysed reaction is [ThiS sulfur-carrier protein]-C-terminal Gly-Gly-AMP + S-sulfanyl-L-cysteinyl-[cysteine desulfurase] + AH2 = [ThiS sulfur-carrier protein]-C-terminal-Gly-aminoethanethioate + L-cysteinyl-[cysteine desulfurase] + A + AMP + 2 H(+). The protein operates within cofactor biosynthesis; thiamine diphosphate biosynthesis. Catalyzes the ATP-dependent transfer of a sulfur to tRNA to produce 4-thiouridine in position 8 of tRNAs, which functions as a near-UV photosensor. Also catalyzes the transfer of sulfur to the sulfur carrier protein ThiS, forming ThiS-thiocarboxylate. This is a step in the synthesis of thiazole, in the thiamine biosynthesis pathway. The sulfur is donated as persulfide by IscS. In Staphylococcus aureus (strain N315), this protein is Probable tRNA sulfurtransferase.